The primary structure comprises 127 residues: Fluoride-specific ion channel FluC (127 aa).

Transmembrane regions (helical) follow at residues 37-57 (TSFV…WLAL), 68-88 (LFLA…SLEV), and 102-122 (LYAG…LWMA). Residues glycine 76 and threonine 79 each coordinate Na(+).

Belongs to the fluoride channel Fluc/FEX (TC 1.A.43) family.

The protein localises to the cell inner membrane. It carries out the reaction fluoride(in) = fluoride(out). Its activity is regulated as follows. Na(+) is not transported, but it plays an essential structural role and its presence is essential for fluoride channel function. In terms of biological role, fluoride-specific ion channel. Important for reducing fluoride concentration in the cell, thus reducing its toxicity. In Hyphomonas neptunium (strain ATCC 15444), this protein is Fluoride-specific ion channel FluC.